A 106-amino-acid polypeptide reads, in one-letter code: Large ribosomal subunit protein uL24 (106 aa).

The protein belongs to the universal ribosomal protein uL24 family. In terms of assembly, part of the 50S ribosomal subunit.

One of two assembly initiator proteins, it binds directly to the 5'-end of the 23S rRNA, where it nucleates assembly of the 50S subunit. Its function is as follows. One of the proteins that surrounds the polypeptide exit tunnel on the outside of the subunit. The chain is Large ribosomal subunit protein uL24 from Delftia acidovorans (strain DSM 14801 / SPH-1).